Consider the following 335-residue polypeptide: Anthranilate phosphoribosyltransferase 2 (335 aa).

Residues Gly-70, 73 to 74, Thr-78, 80 to 83, 98 to 106, and Ser-110 each bind 5-phospho-alpha-D-ribose 1-diphosphate; these read GD, NIST, and KHGNRSASS. Anthranilate is bound at residue Gly-70. Ser-82 contributes to the Mg(2+) binding site. Residue Asn-101 coordinates anthranilate. Arg-156 is a binding site for anthranilate. Residues Asp-215 and Glu-216 each coordinate Mg(2+).

It belongs to the anthranilate phosphoribosyltransferase family. As to quaternary structure, homodimer. The cofactor is Mg(2+).

It catalyses the reaction N-(5-phospho-beta-D-ribosyl)anthranilate + diphosphate = 5-phospho-alpha-D-ribose 1-diphosphate + anthranilate. Its pathway is amino-acid biosynthesis; L-tryptophan biosynthesis; L-tryptophan from chorismate: step 2/5. Functionally, catalyzes the transfer of the phosphoribosyl group of 5-phosphorylribose-1-pyrophosphate (PRPP) to anthranilate to yield N-(5'-phosphoribosyl)-anthranilate (PRA). This chain is Anthranilate phosphoribosyltransferase 2, found in Streptomyces coelicolor (strain ATCC BAA-471 / A3(2) / M145).